Consider the following 283-residue polypeptide: SNF1-related protein kinase regulatory subunit beta-1 (283 aa).

Residues 1–10 (MGNANGKDED) are compositionally biased toward basic and acidic residues. The interval 1–63 (MGNANGKDED…PARSPSPFLF (63 aa)) is disordered. The N-myristoyl glycine moiety is linked to residue Gly2. Residues 43 to 60 (SDSMSSSPPGSPARSPSP) are compositionally biased toward low complexity. Residues 101–178 (PTIITWNQGG…VGNVCNILDV (78 aa)) form a kinase-interacting sequence (KIS) region. The tract at residues 215-283 (EPLAVPPQLH…TVVLYKPLTR (69 aa)) is association with SNF1 complex (ASC).

This sequence belongs to the 5'-AMP-activated protein kinase beta subunit family. Subunit of a probable heterotrimeric complex consisting of an alpha catalytic (KIN10 or KIN11) subunit, and a beta (KINB) and a gamma (KING or SNF4) non-catalytic regulatory subunits. Interacts with SNF4 and CBL1. Interacts with FLZ1, FLZ2, FLZ8, FLZ9, FLZ10, FLZ12, FLZ13, FLZ14 and FLZ15. Sumoylated by SIZ1. As to expression, expressed in vegetative organs and, to lower extent, in reproductive organs.

The protein resides in the cell membrane. Functionally, regulatory subunit of the probable trimeric SNF1-related protein kinase (SnRK) complex, which may play a role in a signal transduction cascade regulating gene expression and carbohydrate metabolism in higher plants. The SnRK complex may also be involved in the regulation of fatty acid synthesis by phosphorylation of acetyl-CoA carboxylase and in assimilation of nitrogen by phosphorylating nitrate reductase. The polypeptide is SNF1-related protein kinase regulatory subunit beta-1 (KINB1) (Arabidopsis thaliana (Mouse-ear cress)).